Reading from the N-terminus, the 222-residue chain is MVLRSEILVNKNVLPTAEQALPGRETPMALPEFHYVFEGTPLLGPFFEGDIDFAIFALGCFWGAERRFWQREGVVSTVVGYAGGFTPNPTYEEVCSGLTGHTEVVLVVFDKNKVSYHDLLTMFWELHNPTQGMRQGNDVGTQYRSAIYCTSPQQLEEAKTSRDAFQAELSKAGFGEITTEIAQAPTVYFAEAYHQQYLAKNPDGYCGIGGTGVCLPPSLQGN.

Cysteine 60 is an active-site residue.

This sequence belongs to the MsrA Met sulfoxide reductase family.

The enzyme catalyses L-methionyl-[protein] + [thioredoxin]-disulfide + H2O = L-methionyl-(S)-S-oxide-[protein] + [thioredoxin]-dithiol. It catalyses the reaction [thioredoxin]-disulfide + L-methionine + H2O = L-methionine (S)-S-oxide + [thioredoxin]-dithiol. In terms of biological role, has an important function as a repair enzyme for proteins that have been inactivated by oxidation. Catalyzes the reversible oxidation-reduction of methionine sulfoxide in proteins to methionine. The sequence is that of Peptide methionine sulfoxide reductase MsrA from Pseudomonas entomophila (strain L48).